We begin with the raw amino-acid sequence, 403 residues long: L-cysteine:1D-myo-inositol 2-amino-2-deoxy-alpha-D-glucopyranoside ligase (403 aa).

Cysteine 43 lines the Zn(2+) pocket. L-cysteinyl-5'-AMP is bound by residues cysteine 43 to threonine 46, threonine 58, and asparagine 81 to threonine 83. Residues isoleucine 45–histidine 55 carry the 'HIGH' region motif. The short motif at glutamate 183 to proline 188 is the 'ERGGDP' region element. L-cysteinyl-5'-AMP is bound at residue tryptophan 223. Residue cysteine 227 coordinates Zn(2+). An L-cysteinyl-5'-AMP-binding site is contributed by glycine 245–aspartate 247. Zn(2+) is bound at residue histidine 252. Valine 279 provides a ligand contact to L-cysteinyl-5'-AMP. The 'KMSKS' region signature appears at lysine 285–serine 289.

Belongs to the class-I aminoacyl-tRNA synthetase family. MshC subfamily. In terms of assembly, monomer. The cofactor is Zn(2+).

It carries out the reaction 1D-myo-inositol 2-amino-2-deoxy-alpha-D-glucopyranoside + L-cysteine + ATP = 1D-myo-inositol 2-(L-cysteinylamino)-2-deoxy-alpha-D-glucopyranoside + AMP + diphosphate + H(+). Functionally, catalyzes the ATP-dependent condensation of GlcN-Ins and L-cysteine to form L-Cys-GlcN-Ins. This chain is L-cysteine:1D-myo-inositol 2-amino-2-deoxy-alpha-D-glucopyranoside ligase, found in Thermobispora bispora (strain ATCC 19993 / DSM 43833 / CBS 139.67 / JCM 10125 / KCTC 9307 / NBRC 14880 / R51).